The primary structure comprises 370 residues: S-adenosylmethionine decarboxylase proenzyme (370 aa).

Phe28 is a substrate binding site. Residues Glu29 and Glu32 contribute to the active site. Residue Glu85 participates in substrate binding. The active-site Schiff-base intermediate with substrate; via pyruvic acid is Ser86. Ser86 carries the pyruvic acid (Ser); by autocatalysis modification. Cys100 serves as the catalytic Proton donor; for catalytic activity. Residues Ser250 and His263 each act as proton acceptor; for processing activity in the active site. Substrate is bound at residue Glu267.

The protein belongs to the eukaryotic AdoMetDC family. Forms a heterodimer with catalytically inactive AdoMetDC prozyme; heterodimerization is required to activate AdoMetDC. Pyruvate is required as a cofactor. Post-translationally, is synthesized initially as an inactive proenzyme. Formation of the active enzyme involves a self-maturation process in which the active site pyruvoyl group is generated from an internal serine residue via an autocatalytic post-translational modification. Two non-identical subunits are generated from the proenzyme in this reaction, and the pyruvate is formed at the N-terminus of the alpha chain, which is derived from the carboxyl end of the proenzyme. The post-translation cleavage follows an unusual pathway, termed non-hydrolytic serinolysis, in which the side chain hydroxyl group of the serine supplies its oxygen atom to form the C-terminus of the beta chain, while the remainder of the serine residue undergoes an oxidative deamination to the alpha chain.

It carries out the reaction S-adenosyl-L-methionine + H(+) = S-adenosyl 3-(methylsulfanyl)propylamine + CO2. Its pathway is amine and polyamine biosynthesis; S-adenosylmethioninamine biosynthesis; S-adenosylmethioninamine from S-adenosyl-L-methionine: step 1/1. Its activity is regulated as follows. Allosterically activated by AdoMetDC prozyme. Activated by putrescine. Inhibited by spermine and methylglyoxal-bis(guanylhydrazone) (MGBG) and slightly by spermidine. Inhibited by 5'-([(Z)-4-amino-2-butenyl]methylamino)-5'-deoxyadenosine (MDL 73811). Functionally, probably in association with catalytically inactive AdoMetDC prozyme, catalyzes the decarboxylation of S-adenosyl-L-methionine which is essential for the biosynthesis of the polyamine spermidine. Required for growth and survival during the bloodstream life cycle stage. The polypeptide is S-adenosylmethionine decarboxylase proenzyme (Trypanosoma cruzi).